We begin with the raw amino-acid sequence, 221 residues long: Urease accessory protein UreF (221 aa).

It belongs to the UreF family. As to quaternary structure, ureD, UreF and UreG form a complex that acts as a GTP-hydrolysis-dependent molecular chaperone, activating the urease apoprotein by helping to assemble the nickel containing metallocenter of UreC. The UreE protein probably delivers the nickel.

It localises to the cytoplasm. Functionally, required for maturation of urease via the functional incorporation of the urease nickel metallocenter. The polypeptide is Urease accessory protein UreF (Aliivibrio fischeri (strain MJ11) (Vibrio fischeri)).